The sequence spans 720 residues: DNA ligase (720 aa).

Residues 57 to 61 (DAEYD), 106 to 107 (SL), and Glu140 each bind NAD(+). The active-site N6-AMP-lysine intermediate is Lys142. Residues Arg163, Glu200, Lys316, and Lys340 each coordinate NAD(+). The Zn(2+) site is built by Cys434, Cys437, Cys458, and Cys464. A BRCT domain is found at 643 to 720 (AAASPVSGKT…TEDEWFELVG (78 aa)).

The protein belongs to the NAD-dependent DNA ligase family. LigA subfamily. Mg(2+) serves as cofactor. The cofactor is Mn(2+).

The enzyme catalyses NAD(+) + (deoxyribonucleotide)n-3'-hydroxyl + 5'-phospho-(deoxyribonucleotide)m = (deoxyribonucleotide)n+m + AMP + beta-nicotinamide D-nucleotide.. Its function is as follows. DNA ligase that catalyzes the formation of phosphodiester linkages between 5'-phosphoryl and 3'-hydroxyl groups in double-stranded DNA using NAD as a coenzyme and as the energy source for the reaction. It is essential for DNA replication and repair of damaged DNA. The sequence is that of DNA ligase from Xanthobacter autotrophicus (strain ATCC BAA-1158 / Py2).